Reading from the N-terminus, the 184-residue chain is MIKAIEGIITKKEPTNVWIKTLSGVSYGISISLFTSASLQKGEKVELFITQVIREDANLLYGFIKESEQRIFEMLLKVNGIGASTAMAVCSSLGPDEFSIAVMNGDDAVLRRVPGIGPKTARTLIAQLSDAKFGEINSMPSYQNEAFMALESLGFKRDRISKVLNECSSNDTASLIKEALKKLA.

The tract at residues 1–64 (MIKAIEGIIT…EDANLLYGFI (64 aa)) is domain I. The domain II stretch occupies residues 65-137 (KESEQRIFEM…LSDAKFGEIN (73 aa)). A region of interest (flexible linker) is located at residue asparagine 137. The interval 138-184 (SMPSYQNEAFMALESLGFKRDRISKVLNECSSNDTASLIKEALKKLA) is domain III.

Belongs to the RuvA family. Homotetramer. Forms an RuvA(8)-RuvB(12)-Holliday junction (HJ) complex. HJ DNA is sandwiched between 2 RuvA tetramers; dsDNA enters through RuvA and exits via RuvB. An RuvB hexamer assembles on each DNA strand where it exits the tetramer. Each RuvB hexamer is contacted by two RuvA subunits (via domain III) on 2 adjacent RuvB subunits; this complex drives branch migration. In the full resolvosome a probable DNA-RuvA(4)-RuvB(12)-RuvC(2) complex forms which resolves the HJ.

The protein localises to the cytoplasm. Its function is as follows. The RuvA-RuvB-RuvC complex processes Holliday junction (HJ) DNA during genetic recombination and DNA repair, while the RuvA-RuvB complex plays an important role in the rescue of blocked DNA replication forks via replication fork reversal (RFR). RuvA specifically binds to HJ cruciform DNA, conferring on it an open structure. The RuvB hexamer acts as an ATP-dependent pump, pulling dsDNA into and through the RuvAB complex. HJ branch migration allows RuvC to scan DNA until it finds its consensus sequence, where it cleaves and resolves the cruciform DNA. The sequence is that of Holliday junction branch migration complex subunit RuvA from Campylobacter fetus subsp. fetus (strain 82-40).